The sequence spans 842 residues: MNHLEGSAEVEVADEAPGGEVNESVEADLEHPEVVEGQQPSPSPPPPAGHEPEDHRGHPAPPPPPPPQEEEEEERGECLARSASTESGFHNHTDTAEGDVLAAARDGYEAERAQDADDESAYAVQYRPEAEEYTEQAEAEHVEAAQRRALPNHLHFHSLEHEEAMNAAYSGYVYTHRLFHRAEDEPYAEPYADYGGLQEHVYEEIGDAPELEARDGLRLYERERDEAAAYRQEALGARLHHYDERSDGESDSPEKEAEFAPYPRMDSYEQEEDIDQIVAEVKQSMSSQSLDKAAEDMPEAEQDLERAPTPGGGHPDSPGLPAPAGQQQRVVGTPGGSEVGQRYSKEKRDAISLAIKDIKEAIEEVKTRTIRSPYTPDEPKEPIWVMRQDISPTRDCDDQRPVDGDSPSPGSSSPLGAESSSIPLHPGDPTEASTNKESRKSLASFPTYVEVPGPCDPEDLIDGIIFAANYLGSTQLLSDKTPSKNVRMMQAQEAVSRIKTAQKLAKSRKKAPEGESQPMTEVDLFISTQRIKVLNADTQEPMMDHPLRTISYIADIGNIVVLMARRRMPRSNSQENVEASHPSQDGKRQYKMICHVFESEDAQLIAQSIGQAFSVAYQEFLRANGINPEDLSQKEYSDLLNTQDMYNDDLIHFSKSENCKDVFIEKQKGEILGVVIVESGWGSILPTVIIANMMHGGPAEKSGKLNIGDQIMSINGTSLVGLPLSTCQSIIKGLKNQSRVKLNIVRCPPVTTVLIRRPDLRYQLGFSVQNGIICSLMRGGIAERGGVRVGHRIIEINGQSVVATPHEKIVHILSNAVGEIHMKTMPAAMYRLLTAQEQPVYI.

Disordered stretches follow at residues 1–121, 238–349, and 366–439; these read MNHL…DESA, RLHH…EKRD, and KTRT…KESR. A Phosphoserine modification is found at S82. Composition is skewed to basic and acidic residues over residues 106 to 115 and 240 to 258; these read DGYEAERAQD and HHYD…KEAE. S246, S250, S252, S267, S284, and S289 each carry phosphoserine. T309 is modified (phosphothreonine). Residues S317 and S372 each carry the phosphoserine modification. T375 carries the post-translational modification Phosphothreonine. A compositionally biased stretch (basic and acidic residues) spans 392–403; sequence PTRDCDDQRPVD. The segment covering 404 to 421 has biased composition (low complexity); the sequence is GDSPSPGSSSPLGAESSS. A phosphoserine mark is found at S406, S408, S413, and S573. The region spanning 460–648 is the PID domain; that stretch reads LIDGIIFAAN…LLNTQDMYND (189 aa). Residues 631-648 form an autoinhibitory helix linker region; the sequence is LSQKEYSDLLNTQDMYND. 2 PDZ domains span residues 661 to 746 and 752 to 828; these read DVFI…NIVR and TVLI…MPAA.

As to quaternary structure, part of a multimeric complex containing STXBP1 and STX1A. Interacts with STXBP1. Component of the brain-specific heterotrimeric complex (LIN-10-LIN-2-LIN-7 complex) composed of at least APBA1, CASK, and LIN7, which associates with the motor protein KIF17 to transport vesicles along microtubules. Within the complex, interacts (via PDZ domain) with the motor protein KIF17; the interaction is direct and is required for association of KIF17 with the cargo that is to be transported. Binds to the cytoplasmic domain of amyloid protein (APP). Interacts (via PDZ 1 and 2 domains) with FSPB. Isoform 3 interacts (via its truncated PID domain) with active, GTP-bound RAB6A. Also interacts with GTP-bound RAB6B. As to expression, isoform 3 is expressed in brain.

The protein resides in the cytoplasm. The protein localises to the perinuclear region. It is found in the nucleus. It localises to the golgi apparatus. In terms of biological role, putative function in synaptic vesicle exocytosis by binding to Munc18-1, an essential component of the synaptic vesicle exocytotic machinery. May modulate processing of the amyloid-beta precursor protein (APP) and hence formation of AAP-beta. Component of the LIN-10-LIN-2-LIN-7 complex, which associates with the motor protein KIF17 to transport vesicles containing N-methyl-D-aspartate (NMDA) receptor subunit NR2B along microtubules. The protein is Amyloid-beta A4 precursor protein-binding family A member 1 of Mus musculus (Mouse).